Reading from the N-terminus, the 729-residue chain is MSESEEISEFGYIMELLAKGKVTIKNIEKELICPACKELFTHPLILPCQHSVCHKCVKELLLSLDDSFNDVASDSSNQSSPRLRLTSPSMDKIDKINRPGWKRNSLTPRPTTFPCPGCEHDVDLGERGVSGLFRNFTLETIVERYRQAARAATAIMCDLCKPPPQESTKSCMDCSASYCNECFKIYHPWGTVKAQHEYVGPTTNFRPKVLMCPEHETERINMYCELCRRPVCHLCKLGGNHSNHRVTTMSSAYKTLKEKLSKDIDFLIGKESQVKSQISELNLLMKETECNGERAKEEALAHFEKLFEILEDRKSSVLKAIDASKKLRLDKFHTQMEEYQGLLENNGLVGYAQEVLKETDQSCFVQTAKQLHLRIQKATESLKSFRPAAQASFEDYVVNISKQTEVLGELSFFSSGIDIPEINEEQSKVYNNALIDWHHPEKDKADSYVLEYRKINRDEEMISWNEIEVHGTSKVVSNLESNSPYAFRVRAYRGSICSPCSRELILHTPPAPVFSFLFDEKCGYNTEHLLLNLKRDRVESRAGFNVLLAAERIQVGHYTSLDYIIGDVGVTKGKHFWACRVEPYSYLVKVGVASSDKLQEWLRSPRDAASPRYEQDSGHDSGSEDACFDSSQPFTLVTIGMKKFFIPKSPTSSNEPENRVLPMPTSIGIFLDCDKGKVSFYDMDHMKCLYERQVDCSHTMYPAFALMGSGGIQLEEAITAKYLEYEEDV.

An RING-type; degenerate zinc finger spans residues 33-84 (CPACKELFTHPLILPCQHSVCHKCVKELLLSLDDSFNDVASDSSNQSSPRLR). B box-type zinc fingers lie at residues 154-192 (AIMC…WGTV) and 207-249 (PKVL…VTTM). Residues C212, H215, C235, and H241 each contribute to the Zn(2+) site. Residues 271–302 (ESQVKSQISELNLLMKETECNGERAKEEALAH) are a coiled coil. The 58-residue stretch at 356–413 (LKETDQSCFVQTAKQLHLRIQKATESLKSFRPAAQASFEDYVVNISKQTEVLGELSFF) folds into the COS domain. Positions 416 to 511 (GIDIPEINEE…RELILHTPPA (96 aa)) constitute a Fibronectin type-III domain. The B30.2/SPRY domain maps to 509-723 (PPAPVFSFLF…LEEAITAKYL (215 aa)). The interval 606 to 626 (RDAASPRYEQDSGHDSGSEDA) is disordered. Basic and acidic residues predominate over residues 613–622 (YEQDSGHDSG).

Belongs to the TRIM/RBCC family. Interacts with CENPH. In terms of tissue distribution, expressed in testis. Strongly expressed in the neural tube region in 14.5 dpc embryos.

Its subcellular location is the cytoplasm. It localises to the cytoplasmic vesicle. The protein localises to the secretory vesicle. It is found in the acrosome. The protein resides in the cytoskeleton. The enzyme catalyses S-ubiquitinyl-[E2 ubiquitin-conjugating enzyme]-L-cysteine + [acceptor protein]-L-lysine = [E2 ubiquitin-conjugating enzyme]-L-cysteine + N(6)-ubiquitinyl-[acceptor protein]-L-lysine.. Its function is as follows. E3 ubiquitin-protein ligase which mediates ubiquitination and subsequent proteasomal degradation of target proteins. Involved in chromosome segregation and cell cycle regulation. May play a role in the acrosome reaction and fertilization. In Mus musculus (Mouse), this protein is E3 ubiquitin-protein ligase Trim36 (Trim36).